We begin with the raw amino-acid sequence, 501 residues long: Type II methyltransferase M.BsuBI (501 aa).

It belongs to the N(4)/N(6)-methyltransferase family.

It carries out the reaction a 2'-deoxyadenosine in DNA + S-adenosyl-L-methionine = an N(6)-methyl-2'-deoxyadenosine in DNA + S-adenosyl-L-homocysteine + H(+). In terms of biological role, a beta subtype methylase that recognizes the double-stranded sequence 5'-CTGCAG-3', methylates A-5 on both strands, and protects the DNA from cleavage by the BsuBI endonuclease. The protein is Type II methyltransferase M.BsuBI (hsdBM) of Bacillus subtilis.